The chain runs to 182 residues: Large ribosomal subunit protein uL5 (182 aa).

The protein belongs to the universal ribosomal protein uL5 family. As to quaternary structure, part of the 50S ribosomal subunit; part of the 5S rRNA/L5/L18/L25 subcomplex. Contacts the 5S rRNA and the P site tRNA. Forms a bridge to the 30S subunit in the 70S ribosome.

This is one of the proteins that bind and probably mediate the attachment of the 5S RNA into the large ribosomal subunit, where it forms part of the central protuberance. In the 70S ribosome it contacts protein S13 of the 30S subunit (bridge B1b), connecting the 2 subunits; this bridge is implicated in subunit movement. Contacts the P site tRNA; the 5S rRNA and some of its associated proteins might help stabilize positioning of ribosome-bound tRNAs. The protein is Large ribosomal subunit protein uL5 of Borrelia turicatae (strain 91E135).